Here is a 111-residue protein sequence, read N- to C-terminus: Cell division protein FtsB (111 aa).

The Cytoplasmic segment spans residues 1–3 (MRL). A helical membrane pass occupies residues 4–21 (ITLFLLLLLLAIQYPLWL). At 22–111 (GKGGWLRVWD…PAALQPNHRH (90 aa)) the chain is on the periplasmic side. Residues 28–64 (RVWDMQKQVASQNQRNAELKQRNLKLEGEVKDLKEGT) adopt a coiled-coil conformation. Residues 90–111 (PAPKTSETPLPPPAALQPNHRH) are disordered.

The protein belongs to the FtsB family. In terms of assembly, part of a complex composed of FtsB, FtsL and FtsQ.

It is found in the cell inner membrane. Functionally, essential cell division protein. May link together the upstream cell division proteins, which are predominantly cytoplasmic, with the downstream cell division proteins, which are predominantly periplasmic. In Ralstonia nicotianae (strain ATCC BAA-1114 / GMI1000) (Ralstonia solanacearum), this protein is Cell division protein FtsB.